Reading from the N-terminus, the 399-residue chain is Probable protein phosphatase 2C 28 (399 aa).

Residues 48–356 (EFSMAVVQAN…DDITVIVVFL (309 aa)) enclose the PPM-type phosphatase domain. Residues D87, G88, D288, and D347 each contribute to the Mn(2+) site.

Belongs to the PP2C family. The cofactor is Mg(2+). Requires Mn(2+) as cofactor.

It catalyses the reaction O-phospho-L-seryl-[protein] + H2O = L-seryl-[protein] + phosphate. It carries out the reaction O-phospho-L-threonyl-[protein] + H2O = L-threonyl-[protein] + phosphate. This chain is Probable protein phosphatase 2C 28, found in Oryza sativa subsp. japonica (Rice).